The following is a 295-amino-acid chain: Sulfotransferase 1E1 (295 aa).

48–53 is a 3'-phosphoadenylyl sulfate binding site; that stretch reads KSGSTW. 106 to 108 contributes to the substrate binding site; that stretch reads KTH. His-108 (proton acceptor) is an active-site residue. Residues Arg-130 and Ser-138 each coordinate 3'-phosphoadenylyl sulfate. Phosphoserine is present on Ser-156. Residues Tyr-193, 227 to 232, and 257 to 259 contribute to the 3'-phosphoadenylyl sulfate site; these read TSFQEM and RKG.

It belongs to the sulfotransferase 1 family. In terms of assembly, homodimer. As to expression, liver of young mature males and uterus.

It is found in the cytoplasm. It localises to the cytosol. The enzyme catalyses estrone + 3'-phosphoadenylyl sulfate = estrone 3-sulfate + adenosine 3',5'-bisphosphate + H(+). It catalyses the reaction (24S)-hydroxycholesterol + 3'-phosphoadenylyl sulfate = (24S)-hydroxycholesterol 3-sulfate + adenosine 3',5'-bisphosphate + H(+). The catalysed reaction is 17beta-estradiol + 3'-phosphoadenylyl sulfate = 17beta-estradiol 3-sulfate + adenosine 3',5'-bisphosphate + H(+). It carries out the reaction 3beta-hydroxyandrost-5-en-17-one + 3'-phosphoadenylyl sulfate = dehydroepiandrosterone 3-sulfate + adenosine 3',5'-bisphosphate + H(+). The enzyme catalyses 4-ethylphenol + 3'-phosphoadenylyl sulfate = 4-ethylphenyl sulfate + adenosine 3',5'-bisphosphate + H(+). With respect to regulation, inhibited by estradiol. Sulfotransferase that utilizes 3'-phospho-5'-adenylyl sulfate (PAPS) as sulfonate donor to catalyze the sulfate conjugation of estradiol and estrone. Is a key enzyme in estrogen homeostasis, the sulfation of estrogens leads to their inactivation. Also sulfates dehydroepiandrosterone (DHEA), pregnenolone, (24S)-hydroxycholesterol and xenobiotic compounds like ethinylestradiol, equalenin, diethyl stilbesterol and 1-naphthol at significantly lower efficiency. Does not sulfonate cortisol, testosterone and dopamine. May play a role in gut microbiota-host metabolic interaction. O-sulfonates 4-ethylphenol (4-EP), a dietary tyrosine-derived metabolite produced by gut bacteria. The product 4-EPS crosses the blood-brain barrier and may negatively regulate oligodendrocyte maturation and myelination, affecting the functional connectivity of different brain regions associated with the limbic system. This chain is Sulfotransferase 1E1, found in Rattus norvegicus (Rat).